We begin with the raw amino-acid sequence, 246 residues long: Chloroplastic group IIB intron splicing facilitator CRS2-A, chloroplastic (246 aa).

Residues 1–34 (MFCASSSPITSPLYPKAYKFSQTKSNSKRFSSLR) constitute a chloroplast transit peptide. Y64 serves as a coordination point for tRNA. H69 serves as the catalytic Proton acceptor. TRNA-binding residues include Y114, N116, and N162.

It belongs to the PTH family. CRS2 subfamily. In terms of assembly, part of large ribonucleo-protein complexes that include group IIB introns and either CAF1 or CAF2.

Its subcellular location is the plastid. It is found in the chloroplast stroma. Required for the splicing of group IIB introns in chloroplasts. The protein is Chloroplastic group IIB intron splicing facilitator CRS2-A, chloroplastic (CRS2A) of Arabidopsis thaliana (Mouse-ear cress).